Here is a 1038-residue protein sequence, read N- to C-terminus: Translation initiation factor IF-2 (1038 aa).

Disordered regions lie at residues 39-346 (TISE…KWQE) and 403-451 (KPKA…PEKV). Residues 103–125 (RNTTSNAPEASVANNQIASSEAN) are compositionally biased toward polar residues. Low complexity predominate over residues 157–176 (PQKPAAPEAEPEAQSQAPAK). Basic and acidic residues-rich tracts occupy residues 178 to 197 (AVEKPEKSAQPRPGKPERQP) and 226 to 243 (PILKRDRPRREDERDQAK). Over residues 407–423 (ARAATAATAAPISSPTT) the composition is skewed to low complexity. Positions 431–450 (NNRDQNRRQETEVKRERPEK) are enriched in basic and acidic residues. In terms of domain architecture, tr-type G spans 532–705 (RRPPVVTIMG…LLVAEVGELS (174 aa)). Residues 541-548 (GHVDHGKT) form a G1 region. A GTP-binding site is contributed by 541-548 (GHVDHGKT). The segment at 566 to 570 (GITQH) is G2. Residues 591 to 594 (DTPG) are G3. GTP is bound by residues 591–595 (DTPGH) and 645–648 (NKID). Positions 645–648 (NKID) are G4. A G5 region spans residues 681-683 (SAI).

Belongs to the TRAFAC class translation factor GTPase superfamily. Classic translation factor GTPase family. IF-2 subfamily.

The protein resides in the cytoplasm. One of the essential components for the initiation of protein synthesis. Protects formylmethionyl-tRNA from spontaneous hydrolysis and promotes its binding to the 30S ribosomal subunits. Also involved in the hydrolysis of GTP during the formation of the 70S ribosomal complex. This chain is Translation initiation factor IF-2, found in Trichormus variabilis (strain ATCC 29413 / PCC 7937) (Anabaena variabilis).